Here is a 120-residue protein sequence, read N- to C-terminus: Host cell factor C1 regulator 1 (120 aa).

Residues 1 to 30 (MILQQPLERGPPSRDPRATTGVTRGLNASL) are disordered. Residues 20–30 (TGVTRGLNASL) are compositionally biased toward polar residues. The interval 58-61 (DHPY) is interaction with HCFC1. Positions 92-101 (IPEALRLLRL) match the Nuclear export signal motif.

As to quaternary structure, interacts with HCFC1.

Its subcellular location is the cytoplasm. The protein localises to the nucleus. Regulates HCFC1 activity by modulating its subcellular localization. Overexpression of HCFC1R1 leads to accumulation of HCFC1 in the cytoplasm. HCFC1R1-mediated export may provide the pool of cytoplasmic HCFC1 required for import of virion-derived VP16 into the nucleus. The chain is Host cell factor C1 regulator 1 (Hcfc1r1) from Mus musculus (Mouse).